Here is a 511-residue protein sequence, read N- to C-terminus: Vesicular acetylcholine transporter (511 aa).

Residues 1–36 lie on the Cytoplasmic side of the membrane; it reads MAVGQAKAAMGKISSAIGERSKRISGAMNEPRRKRK. Residues 37 to 57 form a helical membrane-spanning segment; sequence ILLVIVCIAMLLDNMLYMVIV. Topologically, residues 58-108 are lumenal, vesicle; sequence PIIPNYLETIRTYKLVYITTPSNGTNGSLLNSTQRAVLERNPNANEDIQIG. Asn-80, Asn-83, and Asn-88 each carry an N-linked (GlcNAc...) asparagine glycan. A helical membrane pass occupies residues 109–129; it reads VLFASKAILQLLSNPFTGTFI. The Cytoplasmic segment spans residues 130–135; sequence DRVGYD. Residues 136 to 156 traverse the membrane as a helical segment; it reads IPLLIGLTIMFFSTITFAFGE. Over 157-165 the chain is Lumenal, vesicle; the sequence is SYAILFAAR. The helical transmembrane segment at 166–186 threads the bilayer; sequence SLQGLGSAFADTSGIAMIADK. Topologically, residues 187–197 are cytoplasmic; the sequence is YTEESERTQAL. The helical transmembrane segment at 198-218 threads the bilayer; sequence GIALAFISFGSLVAPPFGGVL. At 219-225 the chain is on the lumenal, vesicle side; sequence YQFAGKW. The helical transmembrane segment at 226-246 threads the bilayer; that stretch reads VPFLVLSFVCLLDGILLLMVV. Residues 247–267 are Cytoplasmic-facing; sequence TPFASRTRVNTLQGTPIYKLM. A helical transmembrane segment spans residues 268-288; sequence IDPYIAVVAGALTTCNIPLAF. The Lumenal, vesicle portion of the chain corresponds to 289–306; sequence LEPTISNWMKKTMNASEW. Asn-302 carries N-linked (GlcNAc...) asparagine glycosylation. Residues 307–327 form a helical membrane-spanning segment; that stretch reads QMGITWLPAFFPHILGVYITV. Residues 328 to 337 lie on the Cytoplasmic side of the membrane; it reads KLAAKYPNYQ. The helical transmembrane segment at 338–358 threads the bilayer; the sequence is WLYGAVGLVIIGASSCTIPAC. Topologically, residues 359–363 are lumenal, vesicle; it reads RNFEE. A helical membrane pass occupies residues 364-384; it reads LIIPLCALCFGIALVDTALLP. Residues 385-400 lie on the Cytoplasmic side of the membrane; it reads TLAFLVDIRYVSVYGS. A helical transmembrane segment spans residues 401 to 421; it reads VYAIADISYSVAYALGPIMAG. Residues 422 to 428 are Lumenal, vesicle-facing; that stretch reads QIVHDLG. The helical transmembrane segment at 429–449 threads the bilayer; it reads FVQLNLGMGLVNILYAPGLLF. The Cytoplasmic segment spans residues 450–511; it reads LRNVCQMKPS…VLSDQEGYSE (62 aa). The tract at residues 485-511 is disordered; sequence EAKEPHGTSSGNHSVHAVLSDQEGYSE.

This sequence belongs to the major facilitator superfamily. Vesicular transporter family. As to expression, high expression in the electric lobe of the brain.

It localises to the membrane. Involved in acetylcholine transport into synaptic vesicles. This Torpedo marmorata (Marbled electric ray) protein is Vesicular acetylcholine transporter.